The chain runs to 279 residues: Lacto-N-neotetraose biosynthesis glycosyltransferase LgtB (279 aa).

It belongs to the glycosyltransferase 25 family.

It functions in the pathway glycan metabolism; lacto-N-neotetraose biosynthesis. It participates in bacterial outer membrane biogenesis; lipooligosaccharide biosynthesis. Functionally, adds the second galactose to the lacto-N-tetraose chain in lipooligosaccharide (LOS). In Neisseria meningitidis serogroup A / serotype 4A (strain DSM 15465 / Z2491), this protein is Lacto-N-neotetraose biosynthesis glycosyltransferase LgtB (lgtB).